The following is a 155-amino-acid chain: Small ribosomal subunit protein uS7c (155 aa).

This sequence belongs to the universal ribosomal protein uS7 family. As to quaternary structure, part of the 30S ribosomal subunit.

It localises to the plastid. Its subcellular location is the chloroplast. In terms of biological role, one of the primary rRNA binding proteins, it binds directly to 16S rRNA where it nucleates assembly of the head domain of the 30S subunit. In Schisandra chinensis (Chinese magnolia vine), this protein is Small ribosomal subunit protein uS7c (rps7).